The chain runs to 283 residues: Serine protease 57 (283 aa).

The signal sequence occupies residues 1–31 (MGLGLRGWGRPLLTVATALMLPVKPPAGSWG). The 230-residue stretch at 34-263 (IIGGHEVTPH…FVAWIWDVVR (230 aa)) folds into the Peptidase S1 domain. The cysteines at positions 59 and 75 are disulfide-linked. Residues H74 and D122 each act as charge relay system in the active site. 2 N-linked (GlcNAc...) asparagine glycosylation sites follow: N129 and N189. Cystine bridges form between C157–C224, C188–C202, and C214–C239. Catalysis depends on S218, which acts as the Charge relay system.

It belongs to the peptidase S1 family. After cleavage of the signal peptide, the N-terminus is probably further processed by CTSC. Processing by CTSC is probably required for accumulation in cytoplasmic granules; in the absence of CTSC the protein does not accumulate. In terms of processing, N-glycosylated. Detected in peripheral blood neutrophil granulocytes, but not in other types of leukocytes. Detected in neutrophils and neutrophil precursors in bone marrow (at protein level). Detected in myeloblasts and promyelocytes in bone marrow.

The protein resides in the cytoplasmic granule lumen. It is found in the secreted. With respect to regulation, inhibited by SERPINA1, SERPINC1 and SERPING1. Serine protease that cleaves preferentially after Arg residues. Can also cleave after citrulline (deimidated arginine) and methylarginine residues. This is Serine protease 57 (PRSS57) from Homo sapiens (Human).